Consider the following 1883-residue polypeptide: DDB1- and CUL4-associated factor homolog 1 (1883 aa).

Disordered stretches follow at residues 1-47 (MDGQ…QSVE) and 309-340 (KPGDDNSVRDDPSRHRLNRSKSRGRGRVHEGA). A compositionally biased stretch (acidic residues) spans 37 to 47 (NPEEGEEQSVE). Positions 309–322 (KPGDDNSVRDDPSR) are enriched in basic and acidic residues. Over residues 323 to 334 (HRLNRSKSRGRG) the composition is skewed to basic residues. Phosphoserine is present on serine 349. Residues 882–924 (NKPPLAQNHQPVPGQATTRPSTDVAVGTQSTGNAPQTPVAPAS) form a disordered region. Polar residues predominate over residues 888 to 917 (QNHQPVPGQATTRPSTDVAVGTQSTGNAPQ). The LisH domain maps to 1087–1119 (DSKELLLLIHEHLQASGLGDTASALLKEAQLTP). Disordered stretches follow at residues 1157-1202 (TSKP…QWPS), 1214-1260 (PKIN…ALPQ), and 1310-1377 (SELR…NPER). Residues 1238–1251 (LTFSPSFSSQSRKQ) show a composition bias toward low complexity. A compositionally biased stretch (basic and acidic residues) spans 1310 to 1329 (SELRDSSVPGKRIDLGERRN). Residues 1330 to 1362 (STFADGSGLQTPASALDANQSGSSRLGQMTPAS) show a composition bias toward polar residues. 5 WD repeats span residues 1464–1503 (DETALFTCIALLGGTNHIAVGSHAGEIKIFEASSGSMLES), 1506–1546 (GHQA…GGPR), 1548–1586 (SFDGCKAAKFSNSGLQFAALSCEASRKDVLLYDVQTCSP), 1587–1626 (CQKLTDTVTSSRSNPYSLVHFSPCDTLILWNGVLWDRRIP), and 1633–1671 (DQFTDYGGGGFHPSRNEVIINSEIWDMRTFKLLRSVPSL). 2 short sequence motifs (DWD box) span residues 1619 to 1626 (VLWDRRIP) and 1655 to 1662 (EIWDMRTF). Residues 1763 to 1883 (YEIGRRRPTD…DDYRDNIRSS (121 aa)) form a disordered region. Composition is skewed to acidic residues over residues 1773 to 1796 (DDSDPDDDDETEDEDEDDEEEDDL) and 1808 to 1864 (DSGD…DGEM).

It belongs to the VPRBP/DCAF1 family. Component of the CUL4-RBX1-DDB1-DCAF1 E3 ubiquitin-protein ligase complex. Interacts with DDB1A through its DWD motifs. Ubiquitous but predominantly expressed in the inflorescence and roots.

It localises to the nucleus. It participates in protein modification; protein ubiquitination. Its function is as follows. Component of the CUL4-RBX1-DDB1-DCAF1 E3 ubiquitin-protein ligase complex, DCAF1 may function as the substrate recognition module within this complex. Appears to be required for plant embryogenesis and to affect several other developmental processes including leaf, shoot, and flower development. The polypeptide is DDB1- and CUL4-associated factor homolog 1 (DCAF1) (Arabidopsis thaliana (Mouse-ear cress)).